The chain runs to 627 residues: Dual specificity testis-specific protein kinase 1 (627 aa).

Positions 1-36 (MAGERPPLRGPGPGEAPGEGPGGAGGGPGRGRPSSY) are disordered. Positions 11 to 30 (PGPGEAPGEGPGGAGGGPGR) are enriched in gly residues. The Protein kinase domain maps to 52-309 (FDCAEKIGAG…TEITQHLEQI (258 aa)). ATP contacts are provided by residues 58-66 (IGAGFFSEV) and Lys81. The Proton acceptor role is filled by Asp170. The residue at position 215 (Ser215) is a Phosphoserine; by autocatalysis. The segment covering 316–330 (ATPLAKPPLTKAPLT) has biased composition (low complexity). Disordered stretches follow at residues 316–373 (ATPL…SWGD), 436–485 (RCRS…GLAP), 500–519 (CSSA…NNNP), and 532–565 (REPW…EPEE). Arg338 carries the omega-N-methylarginine modification. Basic and acidic residues predominate over residues 348-357 (PDPRLSRSRS). A required for interaction with YWHAB region spans residues 421-525 (VTTPDILVQP…NNNPPAVVVN (105 aa)). The interval 528-625 (QGWAREPWNR…PTPSLQLPGA (98 aa)) is required for interaction with PARVA. The interval 528 to 627 (QGWAREPWNR…PSLQLPGARS (100 aa)) is required for interaction with SPRED1 and SPRY2. Required for TESK1-mediated dephosphorylation of SPRY2 and SPRY2 inhibition of ERK phosphorylation.

It belongs to the protein kinase superfamily. TKL Ser/Thr protein kinase family. In terms of assembly, interacts (via both C- and N-termini) with SPRY4 (via C-terminus); the interaction inhibits TESK1 kinase activity. Interacts with TAOK1; the interaction inhibits TAOK1 kinase activity. Interacts (via C-terminus) with SPRED1 (via C-terminus); the interaction inhibits TESK1 kinase activity. Interacts (via C-terminus) with PARVA/PARVIN (via C-terminus); the interaction inhibits TESK1 kinase activity. Interacts with YWHAB/14-3-3 beta; the interaction is dependent on the phosphorylation of TESK1 Ser-439 and inhibits TESK1 kinase activity. Interacts with SPRY1, SPRY3 and SPRED2. Interacts (via C-terminus) with SPRY2 (via C-terminus); the interaction disrupts SPRY2 interaction with PPP2CA/PP2A-C, possibly by vesicular sequestration of SPRY2. Therefore dephosphorylation of SPRY2 by the serine/threonine-protein phosphatase 2A (PP2A) holoenzyme is lost, inhibiting its interaction with GRB2. It depends on Mg(2+) as a cofactor. The cofactor is Mn(2+). Post-translationally, autophosphorylated on serine and tyrosine residues. As to expression, expressed in testes and brain (at protein level).

The protein localises to the cytoplasm. It localises to the perinuclear region. It is found in the cytoskeleton. The protein resides in the microtubule organizing center. Its subcellular location is the centrosome. The protein localises to the cell projection. It localises to the lamellipodium. The enzyme catalyses L-seryl-[protein] + ATP = O-phospho-L-seryl-[protein] + ADP + H(+). The catalysed reaction is L-threonyl-[protein] + ATP = O-phospho-L-threonyl-[protein] + ADP + H(+). It carries out the reaction L-tyrosyl-[protein] + ATP = O-phospho-L-tyrosyl-[protein] + ADP + H(+). With respect to regulation, activated by autophosphorylation on Ser-215. Kinase activity is inhibited by SPRED1. Functionally, dual specificity protein kinase activity catalyzing autophosphorylation and phosphorylation of exogenous substrates on both serine/threonine and tyrosine residues. Regulates the cellular cytoskeleton by enhancing actin stress fiber formation via phosphorylation of cofilin and by preventing microtubule breakdown via inhibition of TAOK1/MARKK kinase activity. Inhibits podocyte motility via regulation of actin cytoskeletal dynamics and phosphorylation of CFL1. Positively regulates integrin-mediated cell spreading, via phosphorylation of cofilin. Suppresses ciliogenesis via multiple pathways; phosphorylation of CFL1, suppression of ciliary vesicle directional trafficking to the ciliary base, and by facilitating YAP1 nuclear localization where it acts as a transcriptional corepressor of the TEAD4 target genes AURKA and PLK1. Probably plays a central role at and after the meiotic phase of spermatogenesis. This is Dual specificity testis-specific protein kinase 1 (Tesk1) from Mus musculus (Mouse).